The following is a 173-amino-acid chain: RxLR effector protein PITG_10232 (173 aa).

An N-terminal signal peptide occupies residues 1–24; sequence MRLGYLIVGCAVALLATTDGVVDA. Positions 25–64 are disordered; that stretch reads SSKHKQLSTDVPRPADDISSERFLRSQDTPEDDGNPAHED. Positions 37–49 are enriched in basic and acidic residues; the sequence is RPADDISSERFLR. Positions 46–65 match the RxLR-dEER motif; it reads RFLRSQDTPEDDGNPAHEDR.

This sequence belongs to the RxLR effector family.

It is found in the secreted. The protein localises to the host nucleus. The protein resides in the host cytoplasm. In terms of biological role, effector that leads to host programmed cell death. In Phytophthora infestans (strain T30-4) (Potato late blight agent), this protein is RxLR effector protein PITG_10232.